Here is a 72-residue protein sequence, read N- to C-terminus: DNA-directed RNA polymerase subunit omega (72 aa).

The protein belongs to the RNA polymerase subunit omega family. As to quaternary structure, the RNAP catalytic core consists of 2 alpha, 1 beta, 1 beta' and 1 omega subunit. When a sigma factor is associated with the core the holoenzyme is formed, which can initiate transcription.

It carries out the reaction RNA(n) + a ribonucleoside 5'-triphosphate = RNA(n+1) + diphosphate. Promotes RNA polymerase assembly. Latches the N- and C-terminal regions of the beta' subunit thereby facilitating its interaction with the beta and alpha subunits. The sequence is that of DNA-directed RNA polymerase subunit omega from Laribacter hongkongensis (strain HLHK9).